The chain runs to 55 residues: ATP synthase protein 8 (55 aa).

The helical transmembrane segment at 4–24 threads the bilayer; sequence LNPNPWFTILIFTWAVFLTIL.

The protein belongs to the ATPase protein 8 family. As to quaternary structure, F-type ATPases have 2 components, CF(1) - the catalytic core - and CF(0) - the membrane proton channel.

The protein resides in the mitochondrion membrane. Functionally, mitochondrial membrane ATP synthase (F(1)F(0) ATP synthase or Complex V) produces ATP from ADP in the presence of a proton gradient across the membrane which is generated by electron transport complexes of the respiratory chain. F-type ATPases consist of two structural domains, F(1) - containing the extramembraneous catalytic core and F(0) - containing the membrane proton channel, linked together by a central stalk and a peripheral stalk. During catalysis, ATP synthesis in the catalytic domain of F(1) is coupled via a rotary mechanism of the central stalk subunits to proton translocation. Part of the complex F(0) domain. Minor subunit located with subunit a in the membrane. In Polypterus ornatipinnis (Ornate bichir), this protein is ATP synthase protein 8 (mt-atp8).